The following is a 599-amino-acid chain: Elongation factor 4 (599 aa).

A tr-type G domain is found at 2 to 184; sequence KNIRNFSIIA…RLVRDIPPPQ (183 aa). GTP is bound by residues 14–19 and 131–134; these read DHGKST and NKID.

The protein belongs to the TRAFAC class translation factor GTPase superfamily. Classic translation factor GTPase family. LepA subfamily.

Its subcellular location is the cell inner membrane. It carries out the reaction GTP + H2O = GDP + phosphate + H(+). In terms of biological role, required for accurate and efficient protein synthesis under certain stress conditions. May act as a fidelity factor of the translation reaction, by catalyzing a one-codon backward translocation of tRNAs on improperly translocated ribosomes. Back-translocation proceeds from a post-translocation (POST) complex to a pre-translocation (PRE) complex, thus giving elongation factor G a second chance to translocate the tRNAs correctly. Binds to ribosomes in a GTP-dependent manner. This is Elongation factor 4 from Salmonella arizonae (strain ATCC BAA-731 / CDC346-86 / RSK2980).